Here is a 204-residue protein sequence, read N- to C-terminus: UPF0301 protein Mflv_0850 (204 aa).

Belongs to the UPF0301 (AlgH) family.

The protein is UPF0301 protein Mflv_0850 of Mycolicibacterium gilvum (strain PYR-GCK) (Mycobacterium gilvum (strain PYR-GCK)).